The chain runs to 496 residues: Cytochrome P450 71A15 (496 aa).

A helical transmembrane segment spans residues 3–23; the sequence is IIIISLCLATILAFLLLKPLL. Heme is bound at residue cysteine 439.

Belongs to the cytochrome P450 family. Heme serves as cofactor.

The protein localises to the membrane. This Arabidopsis thaliana (Mouse-ear cress) protein is Cytochrome P450 71A15 (CYP71A15).